The chain runs to 721 residues: BBSome complex member bbs-7 (721 aa).

Part of BBSome complex, that contains at least bbs-1, bbs-2, bbs-4, bbs-5, osm-12, bbs-8/ttc-8 and bbs-9. Interacts with bbs-1. Expressed in ciliated cells including amphid and both inner and outer labial neurons of the head and in both phasmid neurons PHA and PHB in the tail at larval stages L1 and L2.

The protein resides in the cell projection. Its subcellular location is the cilium. It is found in the cytoplasm. It localises to the cytoskeleton. The protein localises to the cilium basal body. The protein resides in the cilium axoneme. Functionally, component of the BBSome complex. The BBSome complex is thought to function as a coat complex required for sorting of specific membrane proteins to the primary cilia. The BBSome complex is required for ciliogenesis but is dispensable for centriolar satellite function. Required for proper BBSome complex assembly and its ciliary localization. Required for cilia biogenesis and both the assembly and movement of intraflagellar transport proteins along the ciliary axoneme. Plays a role in the removal of degraded mechanosensory receptors within the cilia. Plays a role in guanylyl cyclase localization in the ring-like structures at the base of the finger compartment in AFD sensory neurons. In ciliated sensory neurons, required for the sensation of nitric oxide and avoidance of NO-producing organisms like P.aeruginosa. This Caenorhabditis elegans protein is BBSome complex member bbs-7.